The following is a 405-amino-acid chain: Argininosuccinate synthase (405 aa).

Residue 11-19 (AYSGGLDTS) participates in ATP binding. Position 90 (Tyr-90) interacts with L-citrulline. ATP is bound at residue Gly-119. L-aspartate-binding residues include Thr-121, Asn-125, and Asp-126. Asn-125 lines the L-citrulline pocket. 5 residues coordinate L-citrulline: Arg-129, Ser-178, Ser-187, Glu-263, and Tyr-275.

This sequence belongs to the argininosuccinate synthase family. Type 1 subfamily. As to quaternary structure, homotetramer.

It is found in the cytoplasm. It catalyses the reaction L-citrulline + L-aspartate + ATP = 2-(N(omega)-L-arginino)succinate + AMP + diphosphate + H(+). It participates in amino-acid biosynthesis; L-arginine biosynthesis; L-arginine from L-ornithine and carbamoyl phosphate: step 2/3. In Legionella pneumophila (strain Corby), this protein is Argininosuccinate synthase.